Here is a 494-residue protein sequence, read N- to C-terminus: UPF0371 protein SPCG_0344 (494 aa).

It belongs to the UPF0371 family.

This chain is UPF0371 protein SPCG_0344, found in Streptococcus pneumoniae (strain CGSP14).